A 459-amino-acid chain; its full sequence is Exodeoxyribonuclease 7 large subunit (459 aa).

The protein belongs to the XseA family. Heterooligomer composed of large and small subunits.

It is found in the cytoplasm. The enzyme catalyses Exonucleolytic cleavage in either 5'- to 3'- or 3'- to 5'-direction to yield nucleoside 5'-phosphates.. Functionally, bidirectionally degrades single-stranded DNA into large acid-insoluble oligonucleotides, which are then degraded further into small acid-soluble oligonucleotides. This Yersinia pseudotuberculosis serotype IB (strain PB1/+) protein is Exodeoxyribonuclease 7 large subunit.